The sequence spans 94 residues: Protein canopy homolog 1 (94 aa).

It belongs to the canopy family.

The sequence is that of Protein canopy homolog 1 (Cnpy1) from Mus musculus (Mouse).